A 279-amino-acid polypeptide reads, in one-letter code: MQNVLTQRLTNDEQQKTLKTLIEKNLEIKTMNKFDIENLDLYYGENQALKAINLPIPVRQVTALIGPSGCGKSTLLRCLNRMNDLIEGVKITGKLAMDGEDIYGNVDVADLRIKVGMVFQKPNPFPMSIYENVAYGLRAQGIKDKKHIDEVVERSLRGAALWDEVKDRLKSHAFGLSGGQQQRLCIARTIAMEPDVILMDEPTSALDPIATHKIEELMEELKKNYTIVIVTHSMQQARRISDRTAFFLMGELVEHNDTQVIFSEPSDDRTRGYVNGDFG.

Positions 34–274 (FDIENLDLYY…PSDDRTRGYV (241 aa)) constitute an ABC transporter domain. Residue 66–73 (GPSGCGKS) coordinates ATP.

The protein belongs to the ABC transporter superfamily. Phosphate importer (TC 3.A.1.7) family. As to quaternary structure, the complex is composed of two ATP-binding proteins (PstB), two transmembrane proteins (PstC and PstA) and a solute-binding protein (PstS).

It localises to the cell inner membrane. It catalyses the reaction phosphate(out) + ATP + H2O = ADP + 2 phosphate(in) + H(+). Its function is as follows. Part of the ABC transporter complex PstSACB involved in phosphate import. Responsible for energy coupling to the transport system. The protein is Phosphate import ATP-binding protein PstB 2 of Vibrio vulnificus (strain YJ016).